Reading from the N-terminus, the 404-residue chain is Acetate kinase (404 aa).

A Mg(2+)-binding site is contributed by asparagine 9. Lysine 16 contributes to the ATP binding site. Arginine 100 lines the substrate pocket. Aspartate 157 acts as the Proton donor/acceptor in catalysis. ATP contacts are provided by residues 215-219 (HLGNG), 290-292 (DMR), and 335-339 (GIGEN). Glutamate 386 is a binding site for Mg(2+).

The protein belongs to the acetokinase family. In terms of assembly, homodimer. The cofactor is Mg(2+). Mn(2+) is required as a cofactor.

It is found in the cytoplasm. The catalysed reaction is acetate + ATP = acetyl phosphate + ADP. It functions in the pathway metabolic intermediate biosynthesis; acetyl-CoA biosynthesis; acetyl-CoA from acetate: step 1/2. In terms of biological role, catalyzes the formation of acetyl phosphate from acetate and ATP. Can also catalyze the reverse reaction. The sequence is that of Acetate kinase from Methylocella silvestris (strain DSM 15510 / CIP 108128 / LMG 27833 / NCIMB 13906 / BL2).